The sequence spans 229 residues: Endonuclease V (229 aa).

Mg(2+) is bound by residues Asp-36 and Asp-104.

It belongs to the endonuclease V family. Mg(2+) serves as cofactor.

The protein resides in the cytoplasm. The enzyme catalyses Endonucleolytic cleavage at apurinic or apyrimidinic sites to products with a 5'-phosphate.. Functionally, DNA repair enzyme involved in the repair of deaminated bases. Selectively cleaves double-stranded DNA at the second phosphodiester bond 3' to a deoxyinosine leaving behind the intact lesion on the nicked DNA. The chain is Endonuclease V from Pectobacterium carotovorum subsp. carotovorum (strain PC1).